We begin with the raw amino-acid sequence, 85 residues long: Small ribosomal subunit protein uS17 (85 aa).

It belongs to the universal ribosomal protein uS17 family. Part of the 30S ribosomal subunit.

One of the primary rRNA binding proteins, it binds specifically to the 5'-end of 16S ribosomal RNA. The polypeptide is Small ribosomal subunit protein uS17 (Blochmanniella floridana).